Here is a 290-residue protein sequence, read N- to C-terminus: 6-phospho-5-dehydro-2-deoxy-D-gluconate aldolase (290 aa).

Residue Asp-85 is the Proton donor of the active site. Residues His-86 and His-180 each coordinate Zn(2+). Gly-181 contributes to the dihydroxyacetone phosphate binding site. His-208 lines the Zn(2+) pocket. Dihydroxyacetone phosphate-binding positions include 209-211 and 230-233; these read GAS and NINT. Thr-233 is modified (phosphothreonine).

Belongs to the class II fructose-bisphosphate aldolase family. IolJ subfamily. Requires Zn(2+) as cofactor.

It catalyses the reaction 6-phospho-5-dehydro-2-deoxy-D-gluconate = 3-oxopropanoate + dihydroxyacetone phosphate. Its pathway is polyol metabolism; myo-inositol degradation into acetyl-CoA; acetyl-CoA from myo-inositol: step 6/7. Functionally, produces dihydroxyacetone phosphate (DHAP or glycerone phosphate) and malonic semialdehyde (MSA or 3-oxopropanoate) from 6-phospho-5-dehydro-2-deoxy-D-gluconate (DKGP). This chain is 6-phospho-5-dehydro-2-deoxy-D-gluconate aldolase (iolJ), found in Bacillus subtilis (strain 168).